A 38-amino-acid chain; its full sequence is Photosystem II reaction center protein X (38 aa).

Residues I9–I29 form a helical membrane-spanning segment.

This sequence belongs to the PsbX family. Type 1 subfamily. In terms of assembly, PSII is composed of 1 copy each of membrane proteins PsbA, PsbB, PsbC, PsbD, PsbE, PsbF, PsbH, PsbI, PsbJ, PsbK, PsbL, PsbM, PsbT, PsbX, PsbY, PsbZ, Psb30/Ycf12, at least 3 peripheral proteins of the oxygen-evolving complex and a large number of cofactors. It forms dimeric complexes.

It localises to the plastid. Its subcellular location is the chloroplast thylakoid membrane. Its function is as follows. Involved in the binding and/or turnover of quinones at the Q(B) site of photosystem II (PSII). PSII is a light-driven water plastoquinone oxidoreductase, using light energy to abstract electrons from H(2)O, generating a proton gradient subsequently used for ATP formation. This is Photosystem II reaction center protein X from Thalassiosira pseudonana (Marine diatom).